The chain runs to 217 residues: Small ribosomal subunit protein uS3 (217 aa).

One can recognise a KH type-2 domain in the interval 40–110; it reads IRDLINKGFN…EVYINIHEVR (71 aa).

It belongs to the universal ribosomal protein uS3 family. Part of the 30S ribosomal subunit. Forms a tight complex with proteins S10 and S14.

Functionally, binds the lower part of the 30S subunit head. Binds mRNA in the 70S ribosome, positioning it for translation. The sequence is that of Small ribosomal subunit protein uS3 from Rickettsia felis (strain ATCC VR-1525 / URRWXCal2) (Rickettsia azadi).